A 377-amino-acid polypeptide reads, in one-letter code: Succinyl-diaminopimelate desuccinylase (377 aa).

Histidine 66 contributes to the Zn(2+) binding site. The active site involves aspartate 68. Position 99 (aspartate 99) interacts with Zn(2+). Glutamate 133 acts as the Proton acceptor in catalysis. Positions 134, 162, and 348 each coordinate Zn(2+).

It belongs to the peptidase M20A family. DapE subfamily. Homodimer. Zn(2+) is required as a cofactor. The cofactor is Co(2+).

The enzyme catalyses N-succinyl-(2S,6S)-2,6-diaminopimelate + H2O = (2S,6S)-2,6-diaminopimelate + succinate. Its pathway is amino-acid biosynthesis; L-lysine biosynthesis via DAP pathway; LL-2,6-diaminopimelate from (S)-tetrahydrodipicolinate (succinylase route): step 3/3. Its function is as follows. Catalyzes the hydrolysis of N-succinyl-L,L-diaminopimelic acid (SDAP), forming succinate and LL-2,6-diaminopimelate (DAP), an intermediate involved in the bacterial biosynthesis of lysine and meso-diaminopimelic acid, an essential component of bacterial cell walls. The polypeptide is Succinyl-diaminopimelate desuccinylase (Xylella fastidiosa (strain M12)).